We begin with the raw amino-acid sequence, 208 residues long: Small ribosomal subunit protein uS4 (208 aa).

In terms of domain architecture, S4 RNA-binding spans 95–157 (RRIDNVVYRA…DRLKKLVRSN (63 aa)).

The protein belongs to the universal ribosomal protein uS4 family. In terms of assembly, part of the 30S ribosomal subunit. Contacts protein S5. The interaction surface between S4 and S5 is involved in control of translational fidelity.

One of the primary rRNA binding proteins, it binds directly to 16S rRNA where it nucleates assembly of the body of the 30S subunit. Functionally, with S5 and S12 plays an important role in translational accuracy. This chain is Small ribosomal subunit protein uS4, found in Borrelia turicatae (strain 91E135).